Here is a 421-residue protein sequence, read N- to C-terminus: Serine hydroxymethyltransferase (421 aa).

(6S)-5,6,7,8-tetrahydrofolate contacts are provided by residues Leu121 and 125-127 (GHL). Lys229 carries the post-translational modification N6-(pyridoxal phosphate)lysine.

The protein belongs to the SHMT family. As to quaternary structure, homodimer. Pyridoxal 5'-phosphate is required as a cofactor.

It is found in the cytoplasm. The enzyme catalyses (6R)-5,10-methylene-5,6,7,8-tetrahydrofolate + glycine + H2O = (6S)-5,6,7,8-tetrahydrofolate + L-serine. The protein operates within one-carbon metabolism; tetrahydrofolate interconversion. It functions in the pathway amino-acid biosynthesis; glycine biosynthesis; glycine from L-serine: step 1/1. Its function is as follows. Catalyzes the reversible interconversion of serine and glycine with tetrahydrofolate (THF) serving as the one-carbon carrier. This reaction serves as the major source of one-carbon groups required for the biosynthesis of purines, thymidylate, methionine, and other important biomolecules. Also exhibits THF-independent aldolase activity toward beta-hydroxyamino acids, producing glycine and aldehydes, via a retro-aldol mechanism. The sequence is that of Serine hydroxymethyltransferase from Haemophilus influenzae (strain ATCC 51907 / DSM 11121 / KW20 / Rd).